The primary structure comprises 473 residues: GTPase Der (473 aa).

2 consecutive EngA-type G domains span residues 3 to 167 (FTVA…GKDR) and 203 to 378 (LRVA…RVWN). Residues 9-16 (GRPNVGKS), 56-60 (DTAGL), 119-122 (NKSE), 209-216 (GRPNAGKS), 256-260 (DTAGM), and 321-324 (NKWD) contribute to the GTP site. A KH-like domain is found at 379–463 (KRISTAKLNR…PIRIHFRSAE (85 aa)).

Belongs to the TRAFAC class TrmE-Era-EngA-EngB-Septin-like GTPase superfamily. EngA (Der) GTPase family. Associates with the 50S ribosomal subunit.

GTPase that plays an essential role in the late steps of ribosome biogenesis. This chain is GTPase Der, found in Rhizobium leguminosarum bv. trifolii (strain WSM2304).